Reading from the N-terminus, the 306-residue chain is Pantothenate kinase (306 aa).

91 to 98 (GSVAVGKS) contributes to the ATP binding site.

The protein belongs to the prokaryotic pantothenate kinase family.

Its subcellular location is the cytoplasm. It catalyses the reaction (R)-pantothenate + ATP = (R)-4'-phosphopantothenate + ADP + H(+). It participates in cofactor biosynthesis; coenzyme A biosynthesis; CoA from (R)-pantothenate: step 1/5. This is Pantothenate kinase from Streptococcus pneumoniae (strain JJA).